The sequence spans 400 residues: Diphosphomevalonate decarboxylase (400 aa).

Position 2 is an N-acetylalanine (Ala2). (R)-5-diphosphomevalonate contacts are provided by residues 23–26 (YWGK) and Arg78. A Phosphoserine modification is found at Ser96. (R)-5-diphosphomevalonate-binding positions include 156-161 (SGSACR) and Thr212.

This sequence belongs to the diphosphomevalonate decarboxylase family. In terms of assembly, homodimer. As to expression, expressed in heart, skeletal muscle, lung, liver, brain, pancreas, kidney and placenta.

The protein localises to the cytoplasm. The catalysed reaction is (R)-5-diphosphomevalonate + ATP = isopentenyl diphosphate + ADP + phosphate + CO2. It participates in steroid biosynthesis; cholesterol biosynthesis. Functionally, catalyzes the ATP dependent decarboxylation of (R)-5-diphosphomevalonate to form isopentenyl diphosphate (IPP). Functions in the mevalonate (MVA) pathway leading to isopentenyl diphosphate (IPP), a key precursor for the biosynthesis of isoprenoids and sterol synthesis. The protein is Diphosphomevalonate decarboxylase (MVD) of Homo sapiens (Human).